A 778-amino-acid polypeptide reads, in one-letter code: Subtilisin-like protease SBT5.4 (778 aa).

The N-terminal stretch at 1 to 35 is a signal peptide; that stretch reads MSMTRRYSSTQYSNKMSLQSLSSLLLLVTLFFSPA. Residues 41 to 126 form the Inhibitor I9 domain; that stretch reads SYIVYLGSHA…VFPNKGRKLH (86 aa). Residues 130–634 form the Peptidase S8 domain; the sequence is SWNFMLLAKN…SGHVQPNKAA (505 aa). The active-site Charge relay system is the Asp-163. Asn-218 carries an N-linked (GlcNAc...) asparagine glycan. Catalysis depends on His-230, which acts as the Charge relay system. Asn-253 and Asn-404 each carry an N-linked (GlcNAc...) asparagine glycan. Residues 401–486 form the PA domain; it reads ANGNVTDALL…KDGETLFSYL (86 aa). The Charge relay system role is filled by Ser-567. N-linked (GlcNAc...) asparagine glycans are attached at residues Asn-657, Asn-690, and Asn-732.

Belongs to the peptidase S8 family. In terms of tissue distribution, expressed in the vasculature of roots and leaves, stomata, sepals, stigma, anthers and siliques.

It localises to the endoplasmic reticulum. It is found in the cell membrane. In terms of biological role, serine protease. Has a substrate preference for the hydrophobic residues Phe and Ala and the basic residue Asp in the P1 position, and for Asp, Leu or Ala in the P1' position. Interferes with CLAVATA 3 (CLV3) signaling, but does not cleave CLV3. In Arabidopsis thaliana (Mouse-ear cress), this protein is Subtilisin-like protease SBT5.4.